We begin with the raw amino-acid sequence, 426 residues long: Mediator of RNA polymerase II transcription subunit 4 (426 aa).

A disordered region spans residues 1–56 (MLQHQIVQSPARLGLTGPGSPSVQNPTPTRHGHPTSSSSSQSQHQQIQQQPNLLPS). Residues 19 to 28 (GSPSVQNPTP) show a composition bias toward polar residues. Positions 36–56 (SSSSSQSQHQQIQQQPNLLPS) are enriched in low complexity. A coiled-coil region spans residues 160–212 (TELQEILDLQDAKQKVAREIKSKDSSLLAFANKLKDAERVLDMLVDDYSDYRK). 2 disordered regions span residues 214 to 236 (KRSK…STTV) and 373 to 426 (IAAP…DDED). Acidic residues predominate over residues 406–426 (ILEDDDSSDYSSDDASSDDED).

Belongs to the Mediator complex subunit 4 family. As to quaternary structure, component of the Mediator complex.

The protein resides in the nucleus. In terms of biological role, component of the Mediator complex, a coactivator involved in the regulated transcription of nearly all RNA polymerase II-dependent genes. Mediator functions as a bridge to convey information from gene-specific regulatory proteins to the basal RNA polymerase II transcription machinery. The Mediator complex, having a compact conformation in its free form, is recruited to promoters by direct interactions with regulatory proteins and serves for the assembly of a functional preinitiation complex with RNA polymerase II and the general transcription factors. The polypeptide is Mediator of RNA polymerase II transcription subunit 4 (MED4) (Arabidopsis thaliana (Mouse-ear cress)).